Reading from the N-terminus, the 341-residue chain is Anthranilate phosphoribosyltransferase (341 aa).

Residues Gly80, 83-84 (GD), Thr88, 90-93 (NIST), 108-116 (KHGNRAMSS), and Ser120 contribute to the 5-phospho-alpha-D-ribose 1-diphosphate site. Gly80 is an anthranilate binding site. Ser92 is a Mg(2+) binding site. Residue Asn111 participates in anthranilate binding. Arg166 serves as a coordination point for anthranilate. 2 residues coordinate Mg(2+): Asp225 and Glu226.

It belongs to the anthranilate phosphoribosyltransferase family. Homodimer. It depends on Mg(2+) as a cofactor.

It carries out the reaction N-(5-phospho-beta-D-ribosyl)anthranilate + diphosphate = 5-phospho-alpha-D-ribose 1-diphosphate + anthranilate. It participates in amino-acid biosynthesis; L-tryptophan biosynthesis; L-tryptophan from chorismate: step 2/5. Catalyzes the transfer of the phosphoribosyl group of 5-phosphorylribose-1-pyrophosphate (PRPP) to anthranilate to yield N-(5'-phosphoribosyl)-anthranilate (PRA). The protein is Anthranilate phosphoribosyltransferase of Roseiflexus sp. (strain RS-1).